Here is a 575-residue protein sequence, read N- to C-terminus: Sulfite reductase [NADPH] hemoprotein beta-component (575 aa).

[4Fe-4S] cluster contacts are provided by Cys-439, Cys-445, Cys-484, and Cys-488. Cys-488 is a siroheme binding site.

The protein belongs to the nitrite and sulfite reductase 4Fe-4S domain family. Alpha(8)-beta(8). The alpha component is a flavoprotein, the beta component is a hemoprotein. It depends on siroheme as a cofactor. Requires [4Fe-4S] cluster as cofactor.

It catalyses the reaction hydrogen sulfide + 3 NADP(+) + 3 H2O = sulfite + 3 NADPH + 4 H(+). It participates in sulfur metabolism; hydrogen sulfide biosynthesis; hydrogen sulfide from sulfite (NADPH route): step 1/1. Functionally, component of the sulfite reductase complex that catalyzes the 6-electron reduction of sulfite to sulfide. This is one of several activities required for the biosynthesis of L-cysteine from sulfate. The polypeptide is Sulfite reductase [NADPH] hemoprotein beta-component (Blochmanniella pennsylvanica (strain BPEN)).